Here is a 240-residue protein sequence, read N- to C-terminus: Putative protein FAM10A4 (240 aa).

A disordered region spans residues 38–94; that stretch reads MGGTATQKAKSEENTKEEKPDSKVEEDLKADEPSSEESDLEIDKEGVIEPDTDAPQE. Residues 46-69 are compositionally biased toward basic and acidic residues; sequence AKSEENTKEEKPDSKVEEDLKADE. Residues 85–94 show a composition bias toward acidic residues; it reads IEPDTDAPQE. TPR repeat units follow at residues 110–143, 145–177, and 179–211; these read ANDK…NPRL, ILYA…NPDS, and QPYK…DYDE. The interval 220–240 is disordered; the sequence is VQPRAQKIAEHQRKYERKREE. A compositionally biased stretch (basic and acidic residues) spans 226 to 240; it reads KIAEHQRKYERKREE.

It belongs to the FAM10 family. Highly expressed in bone marrow and weakly in placenta, pancreas, heart and HeLa cell line.

The protein localises to the cytoplasm. The sequence is that of Putative protein FAM10A4 (ST13P4) from Homo sapiens (Human).